The chain runs to 302 residues: Deoxyribonuclease-1-like 1 (302 aa).

The signal sequence occupies residues 1–18 (MHYPTALLFLILVNGAQA). Catalysis depends on residues Glu97 and His148. The cysteines at positions 187 and 224 are disulfide-linked. The N-linked (GlcNAc...) asparagine glycan is linked to Asn261.

The protein belongs to the DNase I family.

It localises to the endoplasmic reticulum. This is Deoxyribonuclease-1-like 1 (DNASE1L1) from Chlorocebus aethiops (Green monkey).